A 260-amino-acid polypeptide reads, in one-letter code: NAD-capped RNA hydrolase NudC (260 aa).

Residue R74 coordinates substrate. Residues C103, C106, C121, and C124 each contribute to the Zn(2+) site. Residue Y129 coordinates substrate. In terms of domain architecture, Nudix hydrolase spans 130 to 253 (PRIFPCIIVA…TIARALIEQT (124 aa)). A divalent metal cation is bound by residues A163, E179, and E183. Positions 164–185 (GFLEAGETLEDCVAREVHEETG) match the Nudix box motif. Position 197-204 (197-204 (QPWAFPSS)) interacts with substrate. Residue E224 participates in a divalent metal cation binding. A246 is a binding site for substrate.

The protein belongs to the Nudix hydrolase family. NudC subfamily. Homodimer. Mg(2+) serves as cofactor. The cofactor is Mn(2+). It depends on Zn(2+) as a cofactor.

It catalyses the reaction a 5'-end NAD(+)-phospho-ribonucleoside in mRNA + H2O = a 5'-end phospho-adenosine-phospho-ribonucleoside in mRNA + beta-nicotinamide D-ribonucleotide + 2 H(+). The catalysed reaction is NAD(+) + H2O = beta-nicotinamide D-ribonucleotide + AMP + 2 H(+). It carries out the reaction NADH + H2O = reduced beta-nicotinamide D-ribonucleotide + AMP + 2 H(+). Functionally, mRNA decapping enzyme that specifically removes the nicotinamide adenine dinucleotide (NAD) cap from a subset of mRNAs by hydrolyzing the diphosphate linkage to produce nicotinamide mononucleotide (NMN) and 5' monophosphate mRNA. The NAD-cap is present at the 5'-end of some mRNAs and stabilizes RNA against 5'-processing. Has preference for mRNAs with a 5'-end purine. Catalyzes the hydrolysis of a broad range of dinucleotide pyrophosphates. The chain is NAD-capped RNA hydrolase NudC from Vibrio parahaemolyticus serotype O3:K6 (strain RIMD 2210633).